Here is a 636-residue protein sequence, read N- to C-terminus: Threonine--tRNA ligase (636 aa).

Residues 1-61 (MLKITLKDGS…NENCEVEILS (61 aa)) enclose the TGS domain. The tract at residues 244 to 534 (EHRKLGKELD…LIEHYEGKFP (291 aa)) is catalytic. Residues Cys-335, His-386, and His-511 each coordinate Zn(2+).

Belongs to the class-II aminoacyl-tRNA synthetase family. In terms of assembly, homodimer. Zn(2+) is required as a cofactor.

The protein localises to the cytoplasm. It carries out the reaction tRNA(Thr) + L-threonine + ATP = L-threonyl-tRNA(Thr) + AMP + diphosphate + H(+). Functionally, catalyzes the attachment of threonine to tRNA(Thr) in a two-step reaction: L-threonine is first activated by ATP to form Thr-AMP and then transferred to the acceptor end of tRNA(Thr). Also edits incorrectly charged L-seryl-tRNA(Thr). The sequence is that of Threonine--tRNA ligase from Natranaerobius thermophilus (strain ATCC BAA-1301 / DSM 18059 / JW/NM-WN-LF).